The primary structure comprises 516 residues: Anaerobic nitric oxide reductase transcription regulator NorR (516 aa).

Position 57 is a 4-aspartylphosphate (Asp57). The 230-residue stretch at 187–416 folds into the Sigma-54 factor interaction domain; it reads IIGLSAPMLQ…LEHAIHRAVV (230 aa). ATP is bound by residues 215–222 and 278–287; these read GETGTGKE and ADNGTLFLDE. The segment at residues 482–501 is a DNA-binding region (H-T-H motif); it reads WAATARALELDVANLHRLAK.

The protein operates within nitrogen metabolism; nitric oxide reduction. In terms of biological role, required for the expression of anaerobic nitric oxide (NO) reductase, acts as a transcriptional activator for at least the norVW operon. Activation also requires sigma-54. The protein is Anaerobic nitric oxide reductase transcription regulator NorR of Klebsiella pneumoniae (strain 342).